A 1310-amino-acid polypeptide reads, in one-letter code: MGAAPGRRGPRLLRPPPPLLLLLLLLRPPPAALTLDPGLLPGDFAADEAGARLFASSYNSSAEQVLFRSTAASWAHDTNITAENARRQEEEALLSQEFAEAWGKKAKELYDPVWQNFTDPELRRIIGAVRTLGPANLPLAKRQQYNSLLSNMSQIYSTGKVCFPNKTASCWSLDPDLNNILASSRSYAMLLFAWEGWHNAVGIPLKPLYQEFTALSNEAYRQDGFSDTGAYWRSWYDSPTFEEDLERIYHQLEPLYLNLHAYVRRVLHRRYGDRYINLRGPIPAHLLGNMWAQSWESIYDMVVPFPDKPNLDVTSTMVQKGWNATHMFRVAEEFFTSLGLLPMPPEFWAESMLEKPEDGREVVCHASAWDFYNRKDFRIKQCTQVTMDQLSTVHHEMGHVQYYLQYKDQPVSLRRANPGFHEAIGDVLALSVSTPAHLHKIGLLDHVTNDTESDINYLLKMALEKIAFLPFGYLVDQWRWGVFSGRTPSSRYNFDWWYLRTKYQGICPPVVRNETHFDAGAKFHIPSVTPYIRYFVSFVLQFQFHQALCMEAGHQGPLHQCDIYQSTRAGAKLRAVLQAGCSRPWQEVLKDMVASDALDAQPLLDYFQPVTQWLQEQNERNGEVLGWPEYQWRPPLPNNYPEGIDLVTDEAEASRFVEEYDRSFQAVWNEYAEANWNYNTNITTEASKILLQKNMQIANHTLTYGNWARRFDVSNFQNATSKRIIKKVQDLQRAVLPVKELEEYNQILLDMETIYSVANVCRVDGSCLQLEPDLTNLMATSRKYDELLWVWTSWRDKVGRAILPYFPKYVEFTNKAARLNGYVDAGDSWRSMYETPTLEQDLERLFQELQPLYLNLHAYVGRALHRHYGAQHINLEGPIPAHLLGNMWAQTWSNIYDLVAPFPSASTMDATEAMIKQGWTPRRMFEEADKFFISLGLLPVPPEFWNKSMLEKPTDGREVVCHASAWDFYNGKDFRIKQCTTVNMEDLVVVHHEMGHIQYFMQYKDLPVALREGANPGFHEAIGDVLALSVSTPKHLHSINLLSSEGGGYEHDINFLMKMALDKIAFIPFSYLVDEWRWRVFDGSITKENYNQEWWSLRLKYQGLCPPAPRSQGDFDPGAKFHIPSSVPYIRYFVSFIIQFQFHEALCKAAGHTGPLHTCDIYQSKEAGKRLADAMKLGYSKPWPEAMKVITGQPNMSASAMMNYFKPLMDWLLTENGRHGEKLGWPQYTWTPNSARSEGSLPDSGRVNFLGMNLDAQQARVGQWVLLFLGVALLLASLGLTQRLFSIRYQSLRQPHHGPQFGSEVELRHS.

Residues 1-33 form the signal peptide; sequence MGAAPGRRGPRLLRPPPPLLLLLLLLRPPPAAL. At 34–1260 the chain is on the extracellular side; the sequence is TLDPGLLPGD…GMNLDAQQAR (1227 aa). Peptidase M2 domains follow at residues 45–628 and 647–1226; these read AADE…LGWP and VTDE…LGWP. N-linked (GlcNAc...) asparagine glycosylation is found at Asn59, Asn79, and Asn151. An intrachain disulfide couples Cys162 to Cys170. Tyr236 is a binding site for chloride. N-linked (GlcNAc...) asparagine glycosylation occurs at Asn323. An intrachain disulfide couples Cys364 to Cys382. Residue His395 coordinates Zn(2+). Glu396 functions as the Proton acceptor 1 in the catalytic mechanism. Residues His399 and Glu422 each coordinate Zn(2+). N-linked (GlcNAc...) asparagine glycans are attached at residues Asn449 and Asn513. His524 acts as the Proton donor 1 in catalysis. Arg533 provides a ligand contact to chloride. Cys549 and Cys561 form a disulfide bridge. N-linked (GlcNAc...) asparagine glycans are attached at residues Asn681, Asn699, and Asn718. Cys761 and Cys767 are disulfide-bonded. Residues Arg795 and Tyr833 each coordinate chloride. Asn946 carries N-linked (GlcNAc...) asparagine glycosylation. A disulfide bridge connects residues Cys961 and Cys979. Residue His992 coordinates Zn(2+). Glu993 (proton acceptor 2) is an active-site residue. Residues His996 and Glu1020 each contribute to the Zn(2+) site. Residues Trp1094 and Arg1098 each coordinate chloride. The active-site Proton donor 2 is the His1122. Arg1131 lines the chloride pocket. A disulfide bridge connects residues Cys1147 and Cys1159. N-linked (GlcNAc...) asparagine glycosylation occurs at Asn1195. Residues 1219–1260 are juxtamembrane stalk; the sequence is HGEKLGWPQYTWTPNSARSEGSLPDSGRVNFLGMNLDAQQAR. Residues 1261 to 1281 traverse the membrane as a helical segment; the sequence is VGQWVLLFLGVALLLASLGLT. At 1282 to 1310 the chain is on the cytoplasmic side; that stretch reads QRLFSIRYQSLRQPHHGPQFGSEVELRHS. Ser1303 carries the post-translational modification Phosphoserine.

It belongs to the peptidase M2 family. In terms of assembly, monomer and homodimer; homodimerizes following binding to an inhibitor. Interacts with calmodulin (CALM1, CALM2 or CALM3); interaction takes place in the cytoplasmic region and regulates phosphorylation and proteolytic cleavage. Requires Zn(2+) as cofactor. The cofactor is chloride. Post-translationally, N-glycosylated. In terms of processing, phosphorylated by CK2 on Ser-1303; which allows membrane retention. Phosphorylated on tyrosine residues on its extracellular part, promoting cleavage by secretase enzymes and formation of the soluble form (Angiotensin-converting enzyme, soluble form). Produced following proteolytic cleavage by secretase enzymes that cleave the transmembrane form in the juxtamembrane stalk region upstream of the transmembrane region. Cleavage can take place at different sites of the juxtamembrane stalk region. In terms of tissue distribution, testis-specific isoform is expressed in spermatocytes, adult testis.

The protein localises to the cell membrane. Its subcellular location is the cytoplasm. It is found in the secreted. The enzyme catalyses Release of a C-terminal dipeptide, oligopeptide-|-Xaa-Yaa, when Xaa is not Pro, and Yaa is neither Asp nor Glu. Thus, conversion of angiotensin I to angiotensin II, with increase in vasoconstrictor activity, but no action on angiotensin II.. The catalysed reaction is angiotensin I + H2O = L-histidyl-L-leucine + angiotensin II. It carries out the reaction bradykinin + H2O = L-Phe-L-Arg + bradykinin(1-7). It catalyses the reaction substance P + H2O = substance P(1-9) + L-Leu-L-Met-NH2. The enzyme catalyses substance P + H2O = substance P(1-8) + Gly-L-Leu-L-Met-NH2. The catalysed reaction is substance P + H2O = L-Phe-L-Phe-Gly-L-Leu-L-Met-NH2 + substance P(1-6). It carries out the reaction neurotensin + H2O = neurotensin(1-11) + L-isoleucyl-L-leucine. It catalyses the reaction goralatide + H2O = N-acetyl-L-seryl-L-aspartate + L-lysyl-L-proline. The enzyme catalyses Met-enkephalin + H2O = L-phenylalanyl-L-methionine + L-tyrosylglycylglycine. The catalysed reaction is Leu-enkephalin + H2O = L-tyrosylglycylglycine + L-phenylalanyl-L-leucine. It carries out the reaction Met-enkephalin-Arg-Phe + H2O = L-arginyl-L-phenylalanine + Met-enkephalin. The dipeptidyl carboxypeptidase activity is strongly activated by chloride. Specifically inhibited by lisinopril. Inhibited by mixanpril, an orally-active drug used for the treatment of hypertension. With respect to regulation, strongly inhibited by lisinopril and captopril. Functionally, dipeptidyl carboxypeptidase that removes dipeptides from the C-terminus of a variety of circulating hormones, such as angiotensin I, bradykinin or enkephalins, thereby playing a key role in the regulation of blood pressure, electrolyte homeostasis or synaptic plasticity. Composed of two similar catalytic domains, each possessing a functional active site, with different selectivity for substrates. Plays a major role in the angiotensin-renin system that regulates blood pressure and sodium retention by the kidney by converting angiotensin I to angiotensin II, resulting in an increase of the vasoconstrictor activity of angiotensin. Also able to inactivate bradykinin, a potent vasodilator, and therefore enhance the blood pressure response. Acts as a regulator of synaptic transmission by mediating cleavage of neuropeptide hormones, such as substance P, neurotensin or enkephalins. Catalyzes degradation of different enkephalin neuropeptides (Met-enkephalin, Leu-enkephalin, Met-enkephalin-Arg-Phe and possibly Met-enkephalin-Arg-Gly-Leu). Acts as a regulator of synaptic plasticity in the nucleus accumbens of the brain by mediating cleavage of Met-enkephalin-Arg-Phe, a strong ligand of Mu-type opioid receptor OPRM1, into Met-enkephalin. Met-enkephalin-Arg-Phe cleavage by ACE decreases activation of OPRM1, leading to long-term synaptic potentiation of glutamate release. Also acts as a regulator of hematopoietic stem cell differentiation by mediating degradation of hemoregulatory peptide N-acetyl-SDKP (AcSDKP). Acts as a regulator of cannabinoid signaling pathway by mediating degradation of hemopressin, an antagonist peptide of the cannabinoid receptor CNR1. Involved in amyloid-beta metabolism by catalyzing degradation of Amyloid-beta protein 40 and Amyloid-beta protein 42 peptides, thereby preventing plaque formation. Catalyzes cleavage of cholecystokinin (maturation of Cholecystokinin-8 and Cholecystokinin-5) and Gonadoliberin-1 (both maturation and degradation) hormones. Degradation of hemoregulatory peptide N-acetyl-SDKP (AcSDKP) and amyloid-beta proteins is mediated by the N-terminal catalytic domain, while angiotensin I and cholecystokinin cleavage is mediated by the C-terminal catalytic region. Its function is as follows. Soluble form that is released in blood plasma and other body fluids following proteolytic cleavage in the juxtamembrane stalk region. Isoform produced by alternative promoter usage that is specifically expressed in spermatocytes and adult testis, and which is required for male fertility. In contrast to somatic isoforms, only contains one catalytic domain. Acts as a dipeptidyl carboxypeptidase that removes dipeptides from the C-terminus of substrates. The identity of substrates that are needed for male fertility is unknown. May also have a glycosidase activity which releases GPI-anchored proteins from the membrane by cleaving the mannose linkage in the GPI moiety. The GPIase activity was reported to be essential for the egg-binding ability of the sperm. This activity is however unclear and has been challenged by other groups, suggesting that it may be indirect. This is Angiotensin-converting enzyme from Oryctolagus cuniculus (Rabbit).